The sequence spans 358 residues: Methylthioribose-1-phosphate isomerase (358 aa).

Substrate contacts are provided by residues 54–56 and Gln205; that span reads CGA. The active-site Proton donor is Asp246. 256-257 is a substrate binding site; the sequence is NQ.

The protein belongs to the eIF-2B alpha/beta/delta subunits family. MtnA subfamily.

The enzyme catalyses 5-(methylsulfanyl)-alpha-D-ribose 1-phosphate = 5-(methylsulfanyl)-D-ribulose 1-phosphate. Its pathway is amino-acid biosynthesis; L-methionine biosynthesis via salvage pathway; L-methionine from S-methyl-5-thio-alpha-D-ribose 1-phosphate: step 1/6. Its function is as follows. Catalyzes the interconversion of methylthioribose-1-phosphate (MTR-1-P) into methylthioribulose-1-phosphate (MTRu-1-P). The chain is Methylthioribose-1-phosphate isomerase from Pseudomonas fluorescens (strain ATCC BAA-477 / NRRL B-23932 / Pf-5).